A 212-amino-acid polypeptide reads, in one-letter code: Pyridoxine/pyridoxamine 5'-phosphate oxidase (212 aa).

Residues 8 to 11 (RRTY) and Lys-66 contribute to the substrate site. FMN contacts are provided by residues 61 to 66 (RIVLLK), 76 to 77 (FT), Arg-82, Lys-83, and Gln-105. Substrate-binding residues include Tyr-123, Arg-127, and Ser-131. FMN is bound by residues 140–141 (QS) and Trp-184. 190 to 192 (RLH) contributes to the substrate binding site. Arg-194 contacts FMN.

Belongs to the pyridoxamine 5'-phosphate oxidase family. In terms of assembly, homodimer. It depends on FMN as a cofactor.

It catalyses the reaction pyridoxamine 5'-phosphate + O2 + H2O = pyridoxal 5'-phosphate + H2O2 + NH4(+). The enzyme catalyses pyridoxine 5'-phosphate + O2 = pyridoxal 5'-phosphate + H2O2. Its pathway is cofactor metabolism; pyridoxal 5'-phosphate salvage; pyridoxal 5'-phosphate from pyridoxamine 5'-phosphate: step 1/1. It functions in the pathway cofactor metabolism; pyridoxal 5'-phosphate salvage; pyridoxal 5'-phosphate from pyridoxine 5'-phosphate: step 1/1. Functionally, catalyzes the oxidation of either pyridoxine 5'-phosphate (PNP) or pyridoxamine 5'-phosphate (PMP) into pyridoxal 5'-phosphate (PLP). In Cupriavidus taiwanensis (strain DSM 17343 / BCRC 17206 / CCUG 44338 / CIP 107171 / LMG 19424 / R1) (Ralstonia taiwanensis (strain LMG 19424)), this protein is Pyridoxine/pyridoxamine 5'-phosphate oxidase.